A 146-amino-acid polypeptide reads, in one-letter code: Cyanate hydratase (146 aa).

Active-site residues include Arg87, Glu90, and Ser113.

This sequence belongs to the cyanase family.

It carries out the reaction cyanate + hydrogencarbonate + 3 H(+) = NH4(+) + 2 CO2. In terms of biological role, catalyzes the reaction of cyanate with bicarbonate to produce ammonia and carbon dioxide. The polypeptide is Cyanate hydratase (Teredinibacter turnerae (strain ATCC 39867 / T7901)).